The sequence spans 86 residues: Protein E7 (86 aa).

The segment at 1–37 (MHGPHPTVKDIELSLAPEDIPVCNVQLDEEDYTDAVE) is E7 terminal domain. Residues 49 to 85 (CTKCSLPLRLVVECSHADIRALEQLLLGTLKLVCPRC) fold into a zinc finger. The short motif at 67–75 (IRALEQLLL) is the Nuclear export signal element.

The protein belongs to the papillomaviridae E7 protein family. As to quaternary structure, homodimer. Homooligomer. Interacts with host RB1; this interaction induces dissociation of RB1-E2F1 complex thereby disrupting RB1 activity. Interacts with host EP300; this interaction represses EP300 transcriptional activity. Interacts with protein E2; this interaction inhibits E7 oncogenic activity. Interacts with host TMEM173/STING; this interaction impairs the ability of TMEM173/STING to sense cytosolic DNA and promote the production of type I interferon (IFN-alpha and IFN-beta). Post-translationally, highly phosphorylated.

The protein resides in the host cytoplasm. It localises to the host nucleus. Its function is as follows. Plays a role in viral genome replication by driving entry of quiescent cells into the cell cycle. Stimulation of progression from G1 to S phase allows the virus to efficiently use the cellular DNA replicating machinery to achieve viral genome replication. E7 protein has both transforming and trans-activating activities. Induces the disassembly of the E2F1 transcription factor from RB1, with subsequent transcriptional activation of E2F1-regulated S-phase genes. Interferes with host histone deacetylation mediated by HDAC1 and HDAC2, leading to transcription activation. Also plays a role in the inhibition of both antiviral and antiproliferative functions of host interferon alpha. Interaction with host TMEM173/STING impairs the ability of TMEM173/STING to sense cytosolic DNA and promote the production of type I interferon (IFN-alpha and IFN-beta). The chain is Protein E7 from Homo sapiens (Human).